The sequence spans 147 residues: Cytochrome c-type biogenesis protein CcmE (147 aa).

Residues 1 to 9 are Cytoplasmic-facing; sequence MKSLKKKRR. A helical; Signal-anchor for type II membrane protein transmembrane segment spans residues 10–30; sequence IQILVAAAVALVLAVGLIGYG. Residues 31–147 are Periplasmic-facing; sequence FRDGINLYRS…EQGVYQEPNS (117 aa). Heme contacts are provided by His-123 and Tyr-127.

Belongs to the CcmE/CycJ family.

It is found in the cell inner membrane. In terms of biological role, heme chaperone required for the biogenesis of c-type cytochromes. Transiently binds heme delivered by CcmC and transfers the heme to apo-cytochromes in a process facilitated by CcmF and CcmH. The polypeptide is Cytochrome c-type biogenesis protein CcmE (Paracoccus denitrificans (strain Pd 1222)).